Consider the following 238-residue polypeptide: Uridylate kinase (238 aa).

10–13 is a binding site for ATP; the sequence is KFSG. An involved in allosteric activation by GTP region spans residues 18–23; it reads GENGFG. Position 52 (G52) interacts with UMP. Positions 53 and 57 each coordinate ATP. Residues D73 and 134–141 contribute to the UMP site; that span reads TGNPFFTT. Residues T161, Y167, and D170 each coordinate ATP.

The protein belongs to the UMP kinase family. As to quaternary structure, homohexamer.

It localises to the cytoplasm. The catalysed reaction is UMP + ATP = UDP + ADP. It functions in the pathway pyrimidine metabolism; CTP biosynthesis via de novo pathway; UDP from UMP (UMPK route): step 1/1. Allosterically activated by GTP. Inhibited by UTP. Its function is as follows. Catalyzes the reversible phosphorylation of UMP to UDP. In Campylobacter concisus (strain 13826), this protein is Uridylate kinase.